Consider the following 1887-residue polypeptide: ATP-dependent DNA helicase tlh1 (1887 aa).

A compositionally biased stretch (basic and acidic residues) spans 329–347 (NQQRREQQDKGENKKRQDD). Disordered stretches follow at residues 329–372 (NQQR…EEEE), 504–552 (ERKE…NTDD), and 1110–1135 (MVEGDKEKDKTNEEKNKDEVKAEMTQ). Acidic residues-rich tracts occupy residues 360–372 (LEDDEKDNDEEEE) and 524–533 (SAEDDNDNDN). The span at 540 to 549 (NNNNNNNNTN) shows a compositional bias: low complexity. Over residues 1112-1131 (EGDKEKDKTNEEKNKDEVKA) the composition is skewed to basic and acidic residues. The Helicase ATP-binding domain maps to 1200 to 1375 (YFSLLNRMNL…RQTFCTNFYV (176 aa)). ATP is bound by residues 1213–1220 (LPTGGGKS) and 1240–1247 (MNMVTLVL). The short motif at 1322–1325 (DEAH) is the DEAH box element. The Helicase C-terminal domain occupies 1401–1559 (DLRTLMKRTK…CVRSFLASEM (159 aa)). Residues 1613-1643 (YNASFSSSPPPQPGNSSGMSAMNTNTTSTTP) are disordered. Over residues 1626-1642 (GNSSGMSAMNTNTTSTT) the composition is skewed to low complexity. The segment at 1804–1821 (STCYKCGKADHNLRECKL) adopts a CCHC-type zinc-finger fold.

This sequence belongs to the helicase family. RecQ subfamily.

It catalyses the reaction Couples ATP hydrolysis with the unwinding of duplex DNA by translocating in the 3'-5' direction.. The catalysed reaction is ATP + H2O = ADP + phosphate + H(+). Its function is as follows. A probable ATP-dependent 3'-5' DNA helicase. Has a role in telomerase-independent telomere maintenance. In Schizosaccharomyces pombe (strain 972 / ATCC 24843) (Fission yeast), this protein is ATP-dependent DNA helicase tlh1.